We begin with the raw amino-acid sequence, 57 residues long: DNA-directed RNA polymerase subunit Rpo6 (57 aa).

This sequence belongs to the archaeal Rpo6/eukaryotic RPB6 RNA polymerase subunit family. Part of the RNA polymerase complex.

It localises to the cytoplasm. The enzyme catalyses RNA(n) + a ribonucleoside 5'-triphosphate = RNA(n+1) + diphosphate. In terms of biological role, DNA-dependent RNA polymerase (RNAP) catalyzes the transcription of DNA into RNA using the four ribonucleoside triphosphates as substrates. The sequence is that of DNA-directed RNA polymerase subunit Rpo6 from Pyrococcus furiosus (strain ATCC 43587 / DSM 3638 / JCM 8422 / Vc1).